Reading from the N-terminus, the 176-residue chain is Ribosome maturation factor RimM (176 aa).

The region spanning 103–176 (QNDEYYFYEI…KIVVKELEWI (74 aa)) is the PRC barrel domain.

The protein belongs to the RimM family. As to quaternary structure, binds ribosomal protein uS19.

Its subcellular location is the cytoplasm. Functionally, an accessory protein needed during the final step in the assembly of 30S ribosomal subunit, possibly for assembly of the head region. Essential for efficient processing of 16S rRNA. May be needed both before and after RbfA during the maturation of 16S rRNA. It has affinity for free ribosomal 30S subunits but not for 70S ribosomes. In Thermotoga neapolitana (strain ATCC 49049 / DSM 4359 / NBRC 107923 / NS-E), this protein is Ribosome maturation factor RimM.